Reading from the N-terminus, the 441-residue chain is MSVTSTASSSRELRAGGGLSGTVRVPGDKSISHRALLFGAIAEGITTIEGLLPAEDPMSTAACLRAMGATISPIHAGQIVRVEGVGLDGLQEPQDVLDCGNSGTTIRLMLGLLAASKGRHFVLSGDSSLRRRPMNRVGQPLTMMGAKIKGRSNGDFAPLAVSGQKLRGGVIGTPVASAQVKSALLLAALTADGATTVIEPAHSRDHSERMLRAFGADLEVGGEMGRHIRVSPGQKLYGQNIVVPGDISSAAFWLVAGVLVPGAELVVENVGLNPTRTGILEVLQQMEARIEVLNRHEVAGEPVGDLRVRQGPLKPFSINGDIIPRLVDEVPILAVAACFCDGESKITDASELRVKETDRLAVMTRQLTAMGADIDEHADGLTIRGGRTLRGTELDSETDHRVAMSLAVAALLAEGNSRLTGSEAAAVSYPNFWDDLERLHR.

Over residues 1 to 10 (MSVTSTASSS) the composition is skewed to polar residues. The tract at residues 1 to 21 (MSVTSTASSSRELRAGGGLSG) is disordered. The 3-phosphoshikimate site is built by K29, S30, and R34. K29 is a phosphoenolpyruvate binding site. 2 residues coordinate phosphoenolpyruvate: G103 and R132. The 3-phosphoshikimate site is built by S177, Q179, D328, and K355. Residue Q179 participates in phosphoenolpyruvate binding. D328 functions as the Proton acceptor in the catalytic mechanism. Phosphoenolpyruvate is bound by residues R359 and R401.

It belongs to the EPSP synthase family. As to quaternary structure, monomer.

It is found in the cytoplasm. It catalyses the reaction 3-phosphoshikimate + phosphoenolpyruvate = 5-O-(1-carboxyvinyl)-3-phosphoshikimate + phosphate. Its pathway is metabolic intermediate biosynthesis; chorismate biosynthesis; chorismate from D-erythrose 4-phosphate and phosphoenolpyruvate: step 6/7. Functionally, catalyzes the transfer of the enolpyruvyl moiety of phosphoenolpyruvate (PEP) to the 5-hydroxyl of shikimate-3-phosphate (S3P) to produce enolpyruvyl shikimate-3-phosphate and inorganic phosphate. This Prochlorococcus marinus (strain MIT 9303) protein is 3-phosphoshikimate 1-carboxyvinyltransferase.